We begin with the raw amino-acid sequence, 306 residues long: Pyridoxal 5'-phosphate synthase subunit PdxS (306 aa).

A D-ribose 5-phosphate-binding site is contributed by aspartate 36. Lysine 93 functions as the Schiff-base intermediate with D-ribose 5-phosphate in the catalytic mechanism. Residue glycine 165 coordinates D-ribose 5-phosphate. D-glyceraldehyde 3-phosphate is bound at residue arginine 177. D-ribose 5-phosphate is bound by residues glycine 226 and 247 to 248; that span reads GS.

The protein belongs to the PdxS/SNZ family. As to quaternary structure, in the presence of PdxT, forms a dodecamer of heterodimers.

The catalysed reaction is aldehydo-D-ribose 5-phosphate + D-glyceraldehyde 3-phosphate + L-glutamine = pyridoxal 5'-phosphate + L-glutamate + phosphate + 3 H2O + H(+). Its pathway is cofactor biosynthesis; pyridoxal 5'-phosphate biosynthesis. Catalyzes the formation of pyridoxal 5'-phosphate from ribose 5-phosphate (RBP), glyceraldehyde 3-phosphate (G3P) and ammonia. The ammonia is provided by the PdxT subunit. Can also use ribulose 5-phosphate and dihydroxyacetone phosphate as substrates, resulting from enzyme-catalyzed isomerization of RBP and G3P, respectively. This Salinispora tropica (strain ATCC BAA-916 / DSM 44818 / JCM 13857 / NBRC 105044 / CNB-440) protein is Pyridoxal 5'-phosphate synthase subunit PdxS.